A 1556-amino-acid polypeptide reads, in one-letter code: MDKINNENDKINISIKAPIGNIEDNNNNSNNNSNNNSVSNSNNNSSISINSGSNTPTNSKNRGIKIFDLDDPFTSKRLSGFFSPESLAELSKLQLNDTDNNDNLTTTTTTTTTTTTTTTTTNTITSKNNSPNTSPLLSSTTISSITSGAPIKKRFERIPSGLSHVTNHYDDDDDDESSSSEEDFDSTELVCRPNKTSSTTATTTTTTTSVSPLTSSFVMRRPSSPSPPPSCSSPTLSPSLSATRRLSGNLVKVATDSDNQSLEPCNNKTIVDNNDNDNDNNNNHNNNNNNNNNNNSTEDISIKPICNKTFLDLDEKIYLKIFGYLFAEDLCSINRVSKHLCNIINNQQLWKDLFSIYIKIYSEPSDIYIWDEDLYSIYNNNNNNNNNNNNNNNNNNNNNNSNISNNNNNINNSNGNNNPYFTGGVSNSSIGAIGGSIGSSAGSNIALKLRSNTSIPIIERGRSNTIAMPTPTFINEINMLNSNNSVNNNNNISNNNTINSNNAGVIINPSGTVNNNINNINSSNSINSSSSSGSNINLSNNNSSTIHGSYISSNLILNSVLRKFTPTTSVPSTNEVTDFIESCHHFPSKLLICKLVQRYLVPREFQRHLSDIDWVKMVERPIQLRVGKLLKKVIDQKKVNFDYGTMLILRSFIRGYIQSTSDMAKGLIVGLQKKQVLKVFDISRVSDILLIKIFRNLDSIKDLSVCQRVSKRWNKAIAISSLWEQLYLNYRKKLHHEGDINIWDDPSLHTVEYLYEFFDQIQPSPQQQQQQQQQQQQQQQQQQQPQLQTNESNNNNEDIKQNDNNNNNSNNNGLNNLQKLIEENLEGSNLSNGGNSGSSFSPFNPLSGSNGGSSFGPFGSGGGGGSNSNIGGSSNQLNSSSGGGGSGFLAMASGGSSVSSVTSTPSTISTNCTPTGGSTTNSPNFQSPMVSSSTVLPPPIPFSPNLSSPRSMSISLSSPPPLPNKPPELKLPDSSLSPNSSFNNNLSSTSISIPSTPTTTPSSSLLTFIPPNTTSTTTTTSTTNITSTTMPISAATTTTTTTTSTTSTIIQPIQPIPPVNNNGSQSDLSKISDLNANPNTTTTTTTNTIESSSSSSSITNNNENIIEPIKSPQPSMINVQKLMNLNQLVDKLTSITVATEISEVNACLATYRTFISTSQLVEKLFQRYHIPRASNIKSILDWKQRIETPIQVKVCKVFKKLIDDHFDDFNGTIIELFKVFLLHIIDKQSPLTNHLIRSFSRKLSGENGSTGSVIGITGGKSSRKGGGSGSGSGSGGGSGSSIIGGAVGGTIKASQSKIGRMMSVRKAQQFNDIISLPAEEIAKQLTLIEFEIFGKIQSSEFLNQSWAKEKTFHLAPNIRASIDRFNTVTKWVCTIILKEEKIRTRTKIMSKLLKVAKNLRSYSNFHTLMAILSGLNEIHIYRLKFTQQELKPKIQKISSELQTLMSVEGNHEAYRTELSNVDPKQSCIPYLGVYLKDLTFIQDDTNKKGDGINIKQSLNLYNILKTIQNFQKNPYSFEEFPKIKETLLNLPVWTEDNLYRVSMQREPRNCKRSDLI.

4 disordered regions span residues 19 to 63 (IGNI…KNRG), 93 to 141 (LQLN…SSTT), 163 to 239 (SHVT…LSPS), and 254 to 296 (ATDS…NNNS). Low complexity-rich tracts occupy residues 25-54 (NNNNSNNNSNNNSVSNSNNNSSISINSGSN) and 96-141 (NDTD…SSTT). The span at 170-186 (DDDDDDESSSSEEDFDS) shows a compositional bias: acidic residues. Low complexity predominate over residues 196-216 (TSSTTATTTTTTTSVSPLTSS). The span at 256–271 (DSDNQSLEPCNNKTIV) shows a compositional bias: polar residues. Positions 279–295 (DNNNNHNNNNNNNNNNN) are enriched in low complexity. Residues 307–353 (NKTFLDLDEKIYLKIFGYLFAEDLCSINRVSKHLCNIINNQQLWKDL) enclose the F-box 1 domain. The segment at 385–416 (NNNNNNNNNNNNNNNNSNISNNNNNINNSNGN) is disordered. Residues 679 to 726 (VFDISRVSDILLIKIFRNLDSIKDLSVCQRVSKRWNKAIAISSLWEQL) enclose the F-box 2 domain. 2 disordered regions span residues 762 to 815 (QPSP…NGLN) and 827 to 1101 (GSNL…ITNN). The span at 827–848 (GSNLSNGGNSGSSFSPFNPLSG) shows a compositional bias: low complexity. Gly residues predominate over residues 849–866 (SNGGSSFGPFGSGGGGGS). 2 stretches are compositionally biased toward low complexity: residues 867-880 (NSNIGGSSNQLNSS) and 888-910 (FLAMASGGSSVSSVTSTPSTIST). Over residues 911–935 (NCTPTGGSTTNSPNFQSPMVSSSTV) the composition is skewed to polar residues. 2 stretches are compositionally biased toward low complexity: residues 943 to 957 (SPNLSSPRSMSISLS) and 972 to 1053 (PDSS…IQPI). Residues 1059 to 1076 (VNNNGSQSDLSKISDLNA) are compositionally biased toward polar residues. Residues 1077 to 1101 (NPNTTTTTTTNTIESSSSSSSITNN) are compositionally biased toward low complexity. Residues 1116 to 1244 (MINVQKLMNL…LIRSFSRKLS (129 aa)) enclose the N-terminal Ras-GEF domain. Residues 1254 to 1279 (IGITGGKSSRKGGGSGSGSGSGGGSG) form a disordered region. A compositionally biased stretch (gly residues) spans 1264 to 1279 (KGGGSGSGSGSGGGSG). The Ras-GEF domain maps to 1317–1548 (PAEEIAKQLT…YRVSMQREPR (232 aa)).

In terms of biological role, promotes the exchange of Ras-bound GDP by GTP. The chain is Ras guanine nucleotide exchange factor G (gefG) from Dictyostelium discoideum (Social amoeba).